The following is a 92-amino-acid chain: UPF0250 protein XAC0666 (92 aa).

The protein belongs to the UPF0250 family.

In Xanthomonas axonopodis pv. citri (strain 306), this protein is UPF0250 protein XAC0666.